A 454-amino-acid chain; its full sequence is Bifunctional protein GlmU (454 aa).

Residues 1–233 (MTNRTCLAVI…RESAVGINNR (233 aa)) form a pyrophosphorylase region. UDP-N-acetyl-alpha-D-glucosamine is bound by residues 11 to 14 (LAAG), Lys25, Gln79, and 84 to 85 (GT). Position 109 (Asp109) interacts with Mg(2+). Gly145, Glu159, Asn174, and Asn231 together coordinate UDP-N-acetyl-alpha-D-glucosamine. Asn231 is a binding site for Mg(2+). The tract at residues 234-254 (AELAEAEAVWQQKRRRELMLS) is linker. The segment at 255-454 (GVTLIAPETV…AEEKAKKSGG (200 aa)) is N-acetyltransferase. Arg320 and Lys338 together coordinate UDP-N-acetyl-alpha-D-glucosamine. The active-site Proton acceptor is His350. 2 residues coordinate UDP-N-acetyl-alpha-D-glucosamine: Tyr353 and Asn364. Acetyl-CoA contacts are provided by residues Ala367, 373–374 (NY), Ser410, and Arg427.

It in the N-terminal section; belongs to the N-acetylglucosamine-1-phosphate uridyltransferase family. In the C-terminal section; belongs to the transferase hexapeptide repeat family. Homotrimer. The cofactor is Mg(2+).

It localises to the cytoplasm. The enzyme catalyses alpha-D-glucosamine 1-phosphate + acetyl-CoA = N-acetyl-alpha-D-glucosamine 1-phosphate + CoA + H(+). It carries out the reaction N-acetyl-alpha-D-glucosamine 1-phosphate + UTP + H(+) = UDP-N-acetyl-alpha-D-glucosamine + diphosphate. It participates in nucleotide-sugar biosynthesis; UDP-N-acetyl-alpha-D-glucosamine biosynthesis; N-acetyl-alpha-D-glucosamine 1-phosphate from alpha-D-glucosamine 6-phosphate (route II): step 2/2. It functions in the pathway nucleotide-sugar biosynthesis; UDP-N-acetyl-alpha-D-glucosamine biosynthesis; UDP-N-acetyl-alpha-D-glucosamine from N-acetyl-alpha-D-glucosamine 1-phosphate: step 1/1. Its pathway is bacterial outer membrane biogenesis; LPS lipid A biosynthesis. Its function is as follows. Catalyzes the last two sequential reactions in the de novo biosynthetic pathway for UDP-N-acetylglucosamine (UDP-GlcNAc). The C-terminal domain catalyzes the transfer of acetyl group from acetyl coenzyme A to glucosamine-1-phosphate (GlcN-1-P) to produce N-acetylglucosamine-1-phosphate (GlcNAc-1-P), which is converted into UDP-GlcNAc by the transfer of uridine 5-monophosphate (from uridine 5-triphosphate), a reaction catalyzed by the N-terminal domain. The chain is Bifunctional protein GlmU from Chelativorans sp. (strain BNC1).